Consider the following 448-residue polypeptide: Trigger factor (448 aa).

Residues 163-248 (GDIVVIDFDG…VKDIRVPKAA (86 aa)) form the PPIase FKBP-type domain.

The protein belongs to the FKBP-type PPIase family. Tig subfamily.

The protein localises to the cytoplasm. It catalyses the reaction [protein]-peptidylproline (omega=180) = [protein]-peptidylproline (omega=0). Functionally, involved in protein export. Acts as a chaperone by maintaining the newly synthesized protein in an open conformation. Functions as a peptidyl-prolyl cis-trans isomerase. The protein is Trigger factor of Rhodospirillum centenum (strain ATCC 51521 / SW).